We begin with the raw amino-acid sequence, 311 residues long: Nuclear hormone receptor family member nhr-111 (311 aa).

Positions 39–115 form a DNA-binding region, nuclear receptor; the sequence is ITLCAVCGDT…KGMNKNAVQP (77 aa). 2 NR C4-type zinc fingers span residues 42 to 62 and 78 to 98; these read CAVC…CFGC and CWNG…CKSC. The NR LBD domain maps to 116 to 311; the sequence is ERTSHSYTVE…KACEIVISFL (196 aa).

It belongs to the nuclear hormone receptor family.

The protein resides in the nucleus. Its function is as follows. Orphan nuclear receptor. The protein is Nuclear hormone receptor family member nhr-111 (nhr-111) of Caenorhabditis elegans.